A 348-amino-acid polypeptide reads, in one-letter code: uncharacterized protein (348 aa).

Residues 132–348 (SECRRSSDAL…QGTRRDSARL (217 aa)) form a disordered region. The segment covering 161 to 178 (STAPIPNAAISSARSSAR) has biased composition (low complexity). Positions 192 to 207 (SRSSSETRSPGGTVQP) are enriched in polar residues. The segment covering 227-273 (AAGSLLPAPRPPASSASSPQAAAPAAPSATRLPRRTTPSAPRPSSRP) has biased composition (low complexity). Residues 274-287 (ARPPIPAARPPPRR) show a composition bias toward pro residues. A compositionally biased stretch (low complexity) spans 288 to 310 (TPGTPRPAAARARAPAGCSPARR).

This is an uncharacterized protein from Streptomyces fradiae (Streptomyces roseoflavus).